We begin with the raw amino-acid sequence, 1099 residues long: Adenylate-forming reductase Nps11 (1099 aa).

Positions 29–360 are adenylation (A) domain; that stretch reads AEHNSNVPFF…GTECGGLNSM (332 aa). AMP is bound by residues histidine 244, 347–348, threonine 352, and 432–435; these read NV and LVGR. Residues 578–664 enclose the Carrier domain; sequence WSEESLVVWL…RLSQALARVV (87 aa). Serine 613 carries the O-(pantetheine 4'-phosphoryl)serine modification. Residues 717-952 are reductase (R) domain; the sequence is LTGSTGGLGS…VVSWLPPHAV (236 aa). NADP(+)-binding positions include 721–724, 809–811, tyrosine 883, and lysine 887; these read TGGL and NAW.

Belongs to the adenylate-forming reductase family.

In terms of biological role, adenylate-forming reductase, a natural product biosynthesis enzyme that resembles non-ribosomal peptide synthetases, yet serves to modify one substrate, rather than to condense two or more building blocks. The A-domain preferentially accepts benzoic acid as substrate. The natural product of the enzyme is not yet known. The polypeptide is Adenylate-forming reductase Nps11 (Serpula lacrymans var. lacrymans (strain S7.9) (Dry rot fungus)).